A 524-amino-acid chain; its full sequence is Decreased expression in renal and prostate cancer protein (524 aa).

A compositionally biased stretch (basic and acidic residues) spans 1-12 (MKEPRIFPRERP). Disordered stretches follow at residues 1–43 (MKEP…TGHP) and 64–252 (PFPR…LDAR). A compositionally biased stretch (low complexity) spans 129–148 (LNPRTGALPGPGPLSNPRLG). Residues 163 to 181 (GLLGAGPDPRGGGPMGPGS) show a composition bias toward gly residues. Ser302 is modified (phosphoserine). Low complexity predominate over residues 312-323 (PMGPNSGPSSRG). The tract at residues 312–332 (PMGPNSGPSSRGIGLPGPNPS) is disordered. The residue at position 364 (Arg364) is an Asymmetric dimethylarginine. Arg387 bears the Omega-N-methylarginine mark. Position 423 is a phosphoserine (Ser423).

It belongs to the DERPC family. Ubiquitously expressed, with abundant expression in kidney, skeletal muscle, testis, liver, ovary, and heart and moderate expression in prostate. Expression is significantly reduced in renal and prostate tumors. No differential expression in breast cancer cells, between lobular carcinoma and normal lobules.

It localises to the nucleus. Its function is as follows. Potential tumor suppressor. Inhibits prostate tumor cell growth, when overexpressed. The chain is Decreased expression in renal and prostate cancer protein from Homo sapiens (Human).